The primary structure comprises 267 residues: Tryptophan synthase alpha chain (267 aa).

Active-site proton acceptor residues include Glu44 and Asp55.

Belongs to the TrpA family. Tetramer of two alpha and two beta chains.

The enzyme catalyses (1S,2R)-1-C-(indol-3-yl)glycerol 3-phosphate + L-serine = D-glyceraldehyde 3-phosphate + L-tryptophan + H2O. Its pathway is amino-acid biosynthesis; L-tryptophan biosynthesis; L-tryptophan from chorismate: step 5/5. Functionally, the alpha subunit is responsible for the aldol cleavage of indoleglycerol phosphate to indole and glyceraldehyde 3-phosphate. This chain is Tryptophan synthase alpha chain, found in Coxiella burnetii (strain Dugway 5J108-111).